The sequence spans 238 residues: MKVLAPLVLASAASAHTIFSSLEVNGVNQGLGEGVRVPTYNGPIEDVTSASIACNGSPNTVASTSKVITVQAGTNVTAIWRYMLSTTGDSPADVMDSSHKGPTIAYLKKVDNAATASGVGNGWFKIQQDGMDSSGVWGTERVINGKGRHSIKIPECIAPGQYLLRAEMIALHAASNYPGAQFYMECAQLNVVGGTGAKTPSTVSFPGAYSGSDPGVKISIYWPPVTSYTVPGPSVFTC.

The N-terminal stretch at Met-1–Ala-15 is a signal peptide. His-16 is a binding site for Cu(2+). Glu-45 contacts O2. Cystine bridges form between Cys-54–Cys-186 and Cys-156–Cys-238. A glycan (N-linked (GlcNAc...) asparagine) is linked at Asn-75. His-99 contacts Cu(2+). Residues His-172 and Gln-181 each contribute to the O2 site. His-172 serves as the catalytic Proton donor. Residue Tyr-183 coordinates Cu(2+).

This sequence belongs to the polysaccharide monooxygenase AA9 family. Monomer. Requires Cu(2+) as cofactor. N-linked glycans containing mannose and N-acetylglucosamine.

The protein localises to the secreted. The catalysed reaction is [(1-&gt;4)-beta-D-glucosyl]n+m + reduced acceptor + O2 = 4-dehydro-beta-D-glucosyl-[(1-&gt;4)-beta-D-glucosyl]n-1 + [(1-&gt;4)-beta-D-glucosyl]m + acceptor + H2O.. The protein operates within glycan metabolism; cellulose degradation. Inhibited by increasing levels of ascorbic acid. In terms of biological role, catalyzes the oxidative cleavage of glycosidic bonds in cellulosic substrates via a copper-dependent mechanism. In the presence of an exogenous reductant ascorbic acid, degrades phosphoric acid swollen cellulose (PASC) to cello-oligosaccharides and 4-ketoaldoses, the end products oxidized at the non-reducing end. Somewhat active toward tamarind xyloglucan and konjac glucomannan, with improved activity with glucomannan in the presence of PASC. H(2)O(2) is able to substitute for O(2) in reactions with PASC, xyloglucan and glucomannan. Very weak activity on cellopentaose. No activity with birchwood xylan or ivory nut mannan. Disrupts plant cell wall polysaccharide substrates, such as recalcitrant crystalline cellulose. In Neurospora crassa (strain ATCC 24698 / 74-OR23-1A / CBS 708.71 / DSM 1257 / FGSC 987), this protein is Lytic polysaccharide monooxygenase NCU01050.